We begin with the raw amino-acid sequence, 622 residues long: Probable E3 ubiquitin-protein ligase DTX2 (622 aa).

2 WWE domains span residues 8–97 (SLVQ…AVRR) and 98–174 (HLFP…SVRR). An asymmetric dimethylarginine mark is found at Arg213, Arg215, and Arg233. The residue at position 249 (Lys249) is an N6-acetyllysine. 2 disordered regions span residues 249–324 (KPSL…VPMQ) and 355–393 (APQP…EPEP). Arg256 is subject to Omega-N-methylarginine. Positions 274-285 (LGSQPLYRSSLS) are enriched in polar residues. Positions 299–322 (SGAVSASLPSGPSSSPGSVPATVP) are enriched in low complexity. Phosphoserine is present on Ser360. The span at 372 to 381 (GSVKRLRKMS) shows a compositional bias: basic residues. The RING-type zinc finger occupies 412-473 (CIICMEKLST…DGSLQCPSCK (62 aa)).

The protein belongs to the Deltex family. Homodimer. May form a heterodimer with other members of the Deltex family. Interacts with NOTCH1.

The protein resides in the cytoplasm. It localises to the nucleus. It catalyses the reaction S-ubiquitinyl-[E2 ubiquitin-conjugating enzyme]-L-cysteine + [acceptor protein]-L-lysine = [E2 ubiquitin-conjugating enzyme]-L-cysteine + N(6)-ubiquitinyl-[acceptor protein]-L-lysine.. It functions in the pathway protein modification; protein ubiquitination. In terms of biological role, regulator of Notch signaling, a signaling pathway involved in cell-cell communications that regulates a broad spectrum of cell-fate determinations. Probably acts both as a positive and negative regulator of Notch, depending on the developmental and cell context. Mediates the antineural activity of Notch, possibly by inhibiting the transcriptional activation mediated by MATCH1. Functions as a ubiquitin ligase protein in vitro, suggesting that it may regulate the Notch pathway via some ubiquitin ligase activity. The sequence is that of Probable E3 ubiquitin-protein ligase DTX2 (DTX2) from Homo sapiens (Human).